The following is a 248-amino-acid chain: Putative transposase YncI (248 aa).

Belongs to the transposase 11 family.

The sequence is that of Putative transposase YncI (yncI) from Escherichia coli (strain K12).